A 218-amino-acid polypeptide reads, in one-letter code: Pyridoxine/pyridoxamine 5'-phosphate oxidase (218 aa).

Substrate contacts are provided by residues 14-17 (RREY) and Lys72. FMN is bound by residues 67–72 (RIVLLK), 82–83 (YT), Arg88, Lys89, and Gln111. Substrate contacts are provided by Tyr129, Arg133, and Ser137. FMN is bound by residues 146 to 147 (QS) and Trp191. 197–199 (RLH) serves as a coordination point for substrate. Residue Arg201 participates in FMN binding.

It belongs to the pyridoxamine 5'-phosphate oxidase family. In terms of assembly, homodimer. FMN serves as cofactor.

The enzyme catalyses pyridoxamine 5'-phosphate + O2 + H2O = pyridoxal 5'-phosphate + H2O2 + NH4(+). It catalyses the reaction pyridoxine 5'-phosphate + O2 = pyridoxal 5'-phosphate + H2O2. It participates in cofactor metabolism; pyridoxal 5'-phosphate salvage; pyridoxal 5'-phosphate from pyridoxamine 5'-phosphate: step 1/1. It functions in the pathway cofactor metabolism; pyridoxal 5'-phosphate salvage; pyridoxal 5'-phosphate from pyridoxine 5'-phosphate: step 1/1. Its function is as follows. Catalyzes the oxidation of either pyridoxine 5'-phosphate (PNP) or pyridoxamine 5'-phosphate (PMP) into pyridoxal 5'-phosphate (PLP). The protein is Pyridoxine/pyridoxamine 5'-phosphate oxidase of Klebsiella pneumoniae subsp. pneumoniae (strain ATCC 700721 / MGH 78578).